A 208-amino-acid chain; its full sequence is dITP/XTP pyrophosphatase (208 aa).

A substrate-binding site is contributed by 11-16 (TGNAKK). Asp73 acts as the Proton acceptor in catalysis. Residue Asp73 coordinates Mg(2+). Residues Ser74, 157–160 (FGYD), Lys180, and 185–186 (HR) contribute to the substrate site.

This sequence belongs to the HAM1 NTPase family. As to quaternary structure, homodimer. Mg(2+) is required as a cofactor.

The enzyme catalyses XTP + H2O = XMP + diphosphate + H(+). It catalyses the reaction dITP + H2O = dIMP + diphosphate + H(+). It carries out the reaction ITP + H2O = IMP + diphosphate + H(+). Functionally, pyrophosphatase that catalyzes the hydrolysis of nucleoside triphosphates to their monophosphate derivatives, with a high preference for the non-canonical purine nucleotides XTP (xanthosine triphosphate), dITP (deoxyinosine triphosphate) and ITP. Seems to function as a house-cleaning enzyme that removes non-canonical purine nucleotides from the nucleotide pool, thus preventing their incorporation into DNA/RNA and avoiding chromosomal lesions. In Rhodopirellula baltica (strain DSM 10527 / NCIMB 13988 / SH1), this protein is dITP/XTP pyrophosphatase.